We begin with the raw amino-acid sequence, 122 residues long: Large ribosomal subunit protein bL12 (122 aa).

This sequence belongs to the bacterial ribosomal protein bL12 family. In terms of assembly, homodimer. Part of the 50S ribosomal subunit; present in 4 copies per ribosome. Forms part of the ribosomal stalk which helps the ribosome interact with GTP-bound translation factors. Forms a pentameric L10(L12)2(L12)2 complex, where L10 forms an elongated spine to which 2 L12 dimers bind in a sequential fashion.

In terms of biological role, forms part of the ribosomal stalk which helps the ribosome interact with GTP-bound translation factors. Is thus essential for accurate translation. This is Large ribosomal subunit protein bL12 from Geobacillus stearothermophilus (Bacillus stearothermophilus).